The primary structure comprises 1030 residues: Isoleucine--tRNA ligase 2 (1030 aa).

The 'HIGH' region signature appears at P48–H58. The short motif at K589–R593 is the 'KMSKS' region element. K592 lines the ATP pocket.

The protein belongs to the class-I aminoacyl-tRNA synthetase family. IleS type 2 subfamily. In terms of assembly, monomer. Zn(2+) serves as cofactor.

The protein resides in the cytoplasm. The enzyme catalyses tRNA(Ile) + L-isoleucine + ATP = L-isoleucyl-tRNA(Ile) + AMP + diphosphate. In terms of biological role, catalyzes the attachment of isoleucine to tRNA(Ile). As IleRS can inadvertently accommodate and process structurally similar amino acids such as valine, to avoid such errors it has two additional distinct tRNA(Ile)-dependent editing activities. One activity is designated as 'pretransfer' editing and involves the hydrolysis of activated Val-AMP. The other activity is designated 'posttransfer' editing and involves deacylation of mischarged Val-tRNA(Ile). Confers high-level resistance to the antibiotic mupirocin (pseudomonic acid A), an Ile-analog produced by P.fluorescens NCIMB 10586 itself that competitively inhibits activation by Ile-tRNA synthetase, thus inhibiting protein biosynthesis. The chain is Isoleucine--tRNA ligase 2 (ileS2) from Pseudomonas fluorescens.